The sequence spans 272 residues: Sordarin/hypoxysordarin biosynthesis cluster protein P (272 aa).

2 N-linked (GlcNAc...) asparagine glycosylation sites follow: Asn-6 and Asn-23. 2 helical membrane passes run 31-51 (FLAS…LLFL) and 67-87 (AYHM…VDLA). N-linked (GlcNAc...) asparagine glycosylation is present at Asn-208.

It is found in the membrane. It participates in antibiotic biosynthesis. Part of the gene cluster that mediates the biosynthesis of sordarin and hypoxysordarin, glycoside antibiotics with a unique tetracyclic diterpene aglycone structure. First, the geranylgeranyl diphosphate synthase sdnC constructs GGDP from farnesyl diphosphate and isopentenyl diphosphate. The diterpene cyclase sdnA then catalyzes the cyclization of GGDP to afford cycloaraneosene. Cycloaraneosene is then hydroxylated four times by the putative cytochrome P450 monooxygenases sdnB, sdnE, sdnF and sdnH to give a hydroxylated cycloaraneosene derivative such as cycloaraneosene-8,9,13,19-tetraol. Although the order of the hydroxylations is unclear, at least C8, C9 and C13 of the cycloaraneosene skeleton are hydroxylated before the sordaricin formation. Dehydration of the 13-hydroxy group of the hydroxylated cycloaraneosene derivative might be catalyzed by an unassigned hypothetical protein such as sdnG and sdnP to construct the cyclopentadiene moiety. The FAD-dependent oxidoreductase sdnN is proposed to catalyze the oxidation at C9 of the hydroxylated cycloaraneosene derivative and also catalyze the Baeyer-Villiger oxidation to give the lactone intermediate. The presumed lactone intermediate would be hydrolyzed to give an acrolein moiety and a carboxylate moiety. Then, [4+2]cycloaddition would occur between the acrolein moiety and the cyclopentadiene moiety to give sordaricin. SdnN might also be involved in the [4+2]cycloaddition after the hypothesized oxidation to accommodate the oxidized product and prompt the [4+2]cycloaddition. GDP-6-deoxy-D-altrose may be biosynthesized from GDP-D-mannose by the putative GDP-mannose-4,6-dehydratase sdnI and the short-chain dehydrogenase sdnK. The glycosyltransferase sdnJ catalyzes the attachment of 6-deoxy-D-altrose onto the 19-hydroxy group of sordaricin to give 4'-O-demethylsordarin. The methyltransferase sdnD would complete the biosynthesis of sordarin. Sordarin can be further modified into hypoxysordarin. The unique acyl chain at the 3'-hydroxy group of hypoxysordarin would be constructed by an iterative type I PKS sdnO and the trans-acting polyketide methyltransferase sdnL. SdnL would be responsible for the introduction of an alpha-methyl group of the polyketide chain. Alternatively, the beta-lactamase-like protein sdnR might be responsible for the cleavage and transfer of the polyketide chain from the PKS sdnO to sordarin. Two putative cytochrome P450 monooxygenases, sdnQ and sdnT, might catalyze the epoxidations of the polyketide chain to complete the biosynthesis of hypoxysordarin. Transcriptional regulators sdnM and sdnS are presumably encoded for the transcriptional regulation of the expression of the sdn gene cluster. This chain is Sordarin/hypoxysordarin biosynthesis cluster protein P, found in Sordaria araneosa (Pleurage araneosa).